The chain runs to 464 residues: Siroheme synthase (464 aa).

The interval 1 to 203 is precorrin-2 dehydrogenase /sirohydrochlorin ferrochelatase; sequence MEFLPLFHNL…GQGAEAERML (203 aa). Residues 22 to 23 and 43 to 44 each bind NAD(+); these read EI and PE. At S128 the chain carries Phosphoserine. The interval 216 to 464 is uroporphyrinogen-III C-methyltransferase; the sequence is GEVYLVGAGP…AWFEGAQATL (249 aa). An S-adenosyl-L-methionine-binding site is contributed by P225. The active-site Proton acceptor is D248. K270 acts as the Proton donor in catalysis. Residues 301–303, I306, 331–332, M383, and G412 contribute to the S-adenosyl-L-methionine site; these read GGD and TA.

This sequence in the N-terminal section; belongs to the precorrin-2 dehydrogenase / sirohydrochlorin ferrochelatase family. The protein in the C-terminal section; belongs to the precorrin methyltransferase family.

It catalyses the reaction uroporphyrinogen III + 2 S-adenosyl-L-methionine = precorrin-2 + 2 S-adenosyl-L-homocysteine + H(+). The catalysed reaction is precorrin-2 + NAD(+) = sirohydrochlorin + NADH + 2 H(+). It carries out the reaction siroheme + 2 H(+) = sirohydrochlorin + Fe(2+). It participates in cofactor biosynthesis; adenosylcobalamin biosynthesis; precorrin-2 from uroporphyrinogen III: step 1/1. The protein operates within cofactor biosynthesis; adenosylcobalamin biosynthesis; sirohydrochlorin from precorrin-2: step 1/1. It functions in the pathway porphyrin-containing compound metabolism; siroheme biosynthesis; precorrin-2 from uroporphyrinogen III: step 1/1. Its pathway is porphyrin-containing compound metabolism; siroheme biosynthesis; siroheme from sirohydrochlorin: step 1/1. It participates in porphyrin-containing compound metabolism; siroheme biosynthesis; sirohydrochlorin from precorrin-2: step 1/1. In terms of biological role, multifunctional enzyme that catalyzes the SAM-dependent methylations of uroporphyrinogen III at position C-2 and C-7 to form precorrin-2 via precorrin-1. Then it catalyzes the NAD-dependent ring dehydrogenation of precorrin-2 to yield sirohydrochlorin. Finally, it catalyzes the ferrochelation of sirohydrochlorin to yield siroheme. In Pseudomonas syringae pv. syringae (strain B728a), this protein is Siroheme synthase.